The primary structure comprises 521 residues: Interleukin-9 receptor (521 aa).

A signal peptide spans 1 to 40 (MGLGRCIWEGWTLESEALRRDMGTWLLACICICTCVCLGV). Over 41 to 270 (SVTGEGQGPR…GPLIPPWGWP (230 aa)) the chain is Extracellular. 2 N-linked (GlcNAc...) asparagine glycosylation sites follow: N117 and N156. The Fibronectin type-III domain maps to 149–259 (PPSDLQSNIS…QPVCFQAPQR (111 aa)). The WSXWS motif motif lies at 245–249 (WSEWS). The helical transmembrane segment at 271–291 (GNTLVAVSIFLLLTGPTYLLF) threads the bilayer. The Cytoplasmic portion of the chain corresponds to 292-521 (KLSPRVKRIF…VLSKARSWTF (230 aa)). The short motif at 301 to 309 (FYQNVPSPA) is the Box 1 motif element. Residues 413 to 439 (WAPTSLTRPAPPDSEGSRSSSSSSSSN) form a disordered region. The segment covering 429–439 (SRSSSSSSSSN) has biased composition (low complexity).

Belongs to the type I cytokine receptor family. Type 4 subfamily. Interacts with IL9.

It is found in the cell membrane. The protein resides in the secreted. Plays an important role in the immune response against parasites by acting as a receptor of IL9. The polypeptide is Interleukin-9 receptor (IL9R) (Homo sapiens (Human)).